Consider the following 137-residue polypeptide: Large ribosomal subunit protein bL12 (137 aa).

The protein belongs to the bacterial ribosomal protein bL12 family. Homodimer. Part of the ribosomal stalk of the 50S ribosomal subunit. Forms a multimeric L10(L12)X complex, where L10 forms an elongated spine to which 2 to 4 L12 dimers bind in a sequential fashion. Binds GTP-bound translation factors.

Its function is as follows. Forms part of the ribosomal stalk which helps the ribosome interact with GTP-bound translation factors. Is thus essential for accurate translation. The polypeptide is Large ribosomal subunit protein bL12 (Synechococcus sp. (strain JA-3-3Ab) (Cyanobacteria bacterium Yellowstone A-Prime)).